A 67-amino-acid polypeptide reads, in one-letter code: Cysteine-rich venom protein bucarin (67 aa).

Residues 13–58 (VDKHNALRRSVRPTARNMLQMEWNSNAAQNAKRFADRCTFAHSPPH) form the SCP domain.

This sequence belongs to the CRISP family. In terms of processing, contains 8 disulfide bonds. Expressed by the venom gland.

The protein localises to the secreted. Its function is as follows. Blocks contraction of smooth muscle elicited by high potassium-induced depolarization, but does not block caffeine-stimulated contraction. May target voltage-gated calcium channels on smooth muscle. The protein is Cysteine-rich venom protein bucarin of Bungarus candidus (Malayan krait).